A 68-amino-acid chain; its full sequence is Amphipathic peptide CT1 (68 aa).

The signal sequence occupies residues 1–23; the sequence is MKTQIVILIVAVLFLQLVSQSDA. A Leucine amide modification is found at Leu36. The propeptide occupies 40 to 68; that stretch reads GLKNLDQYNDLFDGEISDADIKFLKDLMR.

It belongs to the non-disulfide-bridged peptide (NDBP) superfamily. Short antimicrobial peptide (group 4) family. In terms of tissue distribution, expressed by the venom gland.

It is found in the secreted. It localises to the target cell membrane. Amphipathic peptide that shows no antibacterial activity even at 50 uM but shows a low hemolytic activity against human erythrocytes. This Mesomexovis subcristatus (Scorpion) protein is Amphipathic peptide CT1.